The following is an 875-amino-acid chain: Neurotrypsin (875 aa).

The signal sequence occupies residues 1–20 (MTLARFVLALVLGALPEVVX). An N-linked (GlcNAc...) asparagine glycan is attached at asparagine 26. A disordered region spans residues 31–88 (HRPRHSPPTGPHYPYYLPTQQRPPRTRPPPPLPRFPRPPRALPAQRPHALQAGHTPRP). Pro residues predominate over residues 56–71 (TRPPPPLPRFPRPPRA). The Kringle domain occupies 93–165 (CPAGEPWVSV…GKVDWGYCDC (73 aa)). Disulfide bonds link cysteine 93-cysteine 165, cysteine 109-cysteine 149, cysteine 138-cysteine 163, cysteine 195-cysteine 259, cysteine 208-cysteine 269, cysteine 239-cysteine 249, cysteine 305-cysteine 369, cysteine 318-cysteine 379, cysteine 349-cysteine 359, cysteine 412-cysteine 475, cysteine 425-cysteine 485, cysteine 455-cysteine 465, cysteine 525-cysteine 589, cysteine 538-cysteine 599, cysteine 569-cysteine 579, cysteine 619-cysteine 750, cysteine 661-cysteine 677, cysteine 765-cysteine 831, cysteine 794-cysteine 808, and cysteine 821-cysteine 850. 4 SRCR domains span residues 170–271 (IRLR…TCSF), 280–381 (IRLV…SCTP), 387–487 (IRLA…ACYP), and 500–601 (VRLM…ICDY). Positions 619-630 (CGLRLLHRRQKR) are zymogen activation region. The region spanning 631–874 (IIGGKNSLRG…FVPWIKSVTK (244 aa)) is the Peptidase S1 domain. Residue histidine 676 is the Charge relay system of the active site. Asparagine 683 carries N-linked (GlcNAc...) asparagine glycosylation. Catalysis depends on aspartate 726, which acts as the Charge relay system. The active-site Charge relay system is serine 825.

The protein belongs to the peptidase S1 family.

The protein localises to the secreted. Plays a role in neuronal plasticity and the proteolytic action may subserve structural reorganizations associated with learning and memory operations. The sequence is that of Neurotrypsin (PRSS12) from Nomascus leucogenys (Northern white-cheeked gibbon).